The following is a 101-amino-acid chain: Chaperone modulatory protein CbpM (101 aa).

The protein belongs to the CbpM family.

Functionally, interacts with CbpA and inhibits both the DnaJ-like co-chaperone activity and the DNA binding activity of CbpA. Together with CbpA, modulates the activity of the DnaK chaperone system. Does not inhibit the co-chaperone activity of DnaJ. This chain is Chaperone modulatory protein CbpM, found in Citrobacter koseri (strain ATCC BAA-895 / CDC 4225-83 / SGSC4696).